The sequence spans 297 residues: Vesicular-fusion protein SEC17 (297 aa).

It belongs to the SNAP family.

It is found in the membrane. Functionally, required for vesicular transport between the endoplasmic reticulum and the Golgi apparatus. This chain is Vesicular-fusion protein SEC17 (SEC17), found in Komagataella phaffii (strain GS115 / ATCC 20864) (Yeast).